Here is a 521-residue protein sequence, read N- to C-terminus: Cytochrome P450 monooxygenase gloO (521 aa).

Residues 1 to 26 (MIAALFTTNLQLGAVGVFIFALLAFA) form the signal peptide. C464 is a heme binding site.

It belongs to the cytochrome P450 family. Heme is required as a cofactor.

The protein operates within mycotoxin biosynthesis. Functionally, cytochrome P450 monooxygenase; part of the gene cluster that mediates the biosynthesis of pneumocandins, lipohexapeptides of the echinocandin family that prevent fungal cell wall formation by non-competitive inhibition of beta-1,3-glucan synthase. The 10,12-dimethylmyristoyl side chain is synthesized by the reducing polyketide synthase gloL/GLPKS4. The thioesterase gloN/GLHYD exclusively interacts with gloL/GLPKS4 to maintain turnover of the polyketide side chain. The 10R,12S-dimethylmyristic acid is then transferred to the first thiolation domain of the nonribosomal peptide synthetase gloA/GLNRPS4 by the acyl-AMP ligase gloD/GLligase, followed by its acylation to L-ornithine to trigger elongation of the cyclic hexapeptide. L-ornithine, 4R-hydroxyl-L-proline (generated from L-proline by the dioxygenase gloF/GLOXY2), 3S-hydroxyl-L-homotyrosine (generated by gloG/GLHtyB, gloH/GLHtyA, gloI/GLHtyC, gloJ/GLHtyD and hydroxylated at C-3 by the dioxygenase gloM/GLOXY1), 3R-hydroxyl-L-glutamine (generated from L-glutamine probably by the dioxygenase gloE/GLOXY3) and 3S-hydroxyl-L-proline (generated from L-proline by the dioxygenase gloF/GLOXY2 to yield pneumocandin B0), or 3S-hydroxyl-4S-methyl-L-proline (generated from L-leucine by the dioxygenase gloC/GLOXY4 to yield pneumocandin A0) are sequentially added to the growing chain. The last C domain of gloA/GLNRPS4 is proposed to be responsible for cyclization by condensation to form the peptide bond between L-ornithine and 3S-hydroxyl-4S-methyl-L-proline (for pneumocandin A0) or 3S-hydroxyl-L-proline (for pneumocandin B0). Finally, the subsequent C-4 hydroxylation of 3S-hydroxyl-L-homotyrosine and L-ornithine dihydroxylation at C-4 and C-5 are performed by the cytochrome P450 monooxygenases gloP/GLP450-1 and gloO/GLP450-2, respectively. The chain is Cytochrome P450 monooxygenase gloO from Glarea lozoyensis (strain ATCC 20868 / MF5171).